We begin with the raw amino-acid sequence, 357 residues long: Chaperone protein DnaJ (357 aa).

Residues Asp-4 to Gly-69 enclose the J domain. The segment at Gly-132–Asn-213 adopts a CR-type zinc-finger fold. Positions 145, 148, 161, 164, 187, 190, 201, and 204 each coordinate Zn(2+). CXXCXGXG motif repeat units lie at residues Cys-145 to Gly-152, Cys-161 to Gly-168, Cys-187 to Gly-194, and Cys-201 to Gly-208.

This sequence belongs to the DnaJ family. Homodimer. Zn(2+) is required as a cofactor.

The protein localises to the cytoplasm. In terms of biological role, participates actively in the response to hyperosmotic and heat shock by preventing the aggregation of stress-denatured proteins and by disaggregating proteins, also in an autonomous, DnaK-independent fashion. Unfolded proteins bind initially to DnaJ; upon interaction with the DnaJ-bound protein, DnaK hydrolyzes its bound ATP, resulting in the formation of a stable complex. GrpE releases ADP from DnaK; ATP binding to DnaK triggers the release of the substrate protein, thus completing the reaction cycle. Several rounds of ATP-dependent interactions between DnaJ, DnaK and GrpE are required for fully efficient folding. Also involved, together with DnaK and GrpE, in the DNA replication of plasmids through activation of initiation proteins. The polypeptide is Chaperone protein DnaJ (Picrophilus torridus (strain ATCC 700027 / DSM 9790 / JCM 10055 / NBRC 100828 / KAW 2/3)).